A 374-amino-acid chain; its full sequence is Putative phosphoserine aminotransferase (374 aa).

Residue arginine 48 coordinates L-glutamate. Residues 82 to 83 (AT), phenylalanine 106, threonine 152, aspartate 174, and glutamine 197 each bind pyridoxal 5'-phosphate. Lysine 198 bears the N6-(pyridoxal phosphate)lysine mark. Pyridoxal 5'-phosphate is bound at residue 249–250 (NT).

Belongs to the class-V pyridoxal-phosphate-dependent aminotransferase family. SerC subfamily. Homodimer. Pyridoxal 5'-phosphate serves as cofactor.

The protein localises to the cytoplasm. It carries out the reaction O-phospho-L-serine + 2-oxoglutarate = 3-phosphooxypyruvate + L-glutamate. The enzyme catalyses 4-(phosphooxy)-L-threonine + 2-oxoglutarate = (R)-3-hydroxy-2-oxo-4-phosphooxybutanoate + L-glutamate. Its pathway is amino-acid biosynthesis; L-serine biosynthesis; L-serine from 3-phospho-D-glycerate: step 2/3. It functions in the pathway cofactor biosynthesis; pyridoxine 5'-phosphate biosynthesis; pyridoxine 5'-phosphate from D-erythrose 4-phosphate: step 3/5. Functionally, catalyzes the reversible conversion of 3-phosphohydroxypyruvate to phosphoserine and of 3-hydroxy-2-oxo-4-phosphonooxybutanoate to phosphohydroxythreonine. The protein is Putative phosphoserine aminotransferase of Mycobacterium avium (strain 104).